A 431-amino-acid polypeptide reads, in one-letter code: Serine/threonine-protein kinase PknA (431 aa).

Residues 1-339 (MSPRVGVTLS…RRTFSSGQRA (339 aa)) lie on the Cytoplasmic side of the membrane. The Protein kinase domain maps to 13 to 272 (YRLQRLIATG…SGGPFADAVA (260 aa)). Residues 19–27 (IATGGMGQV) and Lys42 each bind ATP. The active-site Proton acceptor is the Asp141. Residues 276–333 (AGRRPPRPSQTPPPGRAAPAAIPSGTTARVAANSAGRTAASRRSRPATGGHRPPRRTF) form a disordered region. Residues 282 to 291 (RPSQTPPPGR) are compositionally biased toward pro residues. The span at 292-314 (AAPAAIPSGTTARVAANSAGRTA) shows a compositional bias: low complexity. The helical transmembrane segment at 340-360 (LLWAAGVLGALAIIIAVLLVI) threads the bilayer. Topologically, residues 361 to 431 (KAPGDNSPQQ…ASLARYEIAQ (71 aa)) are extracellular. The segment at 366–418 (NSPQQAPTPTVTTTGNPPASNTGGTDASPRLNWTERGETRHSGLQSWVVPPTP) is disordered. Positions 368-384 (PQQAPTPTVTTTGNPPA) are enriched in low complexity.

This sequence belongs to the protein kinase superfamily. Ser/Thr protein kinase family. Post-translationally, autophosphorylated.

It is found in the cell membrane. It catalyses the reaction L-seryl-[protein] + ATP = O-phospho-L-seryl-[protein] + ADP + H(+). The catalysed reaction is L-threonyl-[protein] + ATP = O-phospho-L-threonyl-[protein] + ADP + H(+). Protein kinase that regulates many aspects of mycobacterial physiology. Is a key component of a signal transduction pathway that regulates cell growth, cell shape and cell division via phosphorylation of target proteins. The polypeptide is Serine/threonine-protein kinase PknA (pknA) (Mycobacterium bovis (strain ATCC BAA-935 / AF2122/97)).